Consider the following 190-residue polypeptide: UPF0301 protein Pfl01_5311 (190 aa).

The protein belongs to the UPF0301 (AlgH) family.

In Pseudomonas fluorescens (strain Pf0-1), this protein is UPF0301 protein Pfl01_5311.